We begin with the raw amino-acid sequence, 200 residues long: Large ribosomal subunit protein uL4 (200 aa).

The segment at 42 to 65 (TRAQKTRSDVSGGGAKPWRQKGTG) is disordered.

Belongs to the universal ribosomal protein uL4 family. As to quaternary structure, part of the 50S ribosomal subunit.

Functionally, one of the primary rRNA binding proteins, this protein initially binds near the 5'-end of the 23S rRNA. It is important during the early stages of 50S assembly. It makes multiple contacts with different domains of the 23S rRNA in the assembled 50S subunit and ribosome. Forms part of the polypeptide exit tunnel. This Photobacterium profundum (strain SS9) protein is Large ribosomal subunit protein uL4.